Here is a 246-residue protein sequence, read N- to C-terminus: Trypsin V-B (246 aa).

Residues 1–15 (MKICIFFTLLGTVAA) form the signal peptide. A propeptide spans 16-24 (FPTEDNDDR) (activation peptide). Positions 25-244 (IVGGYTCQEH…YLNWIQQTVA (220 aa)) constitute a Peptidase S1 domain. 6 disulfides stabilise this stretch: cysteine 31–cysteine 160, cysteine 49–cysteine 65, cysteine 133–cysteine 233, cysteine 140–cysteine 206, cysteine 171–cysteine 185, and cysteine 196–cysteine 220. Catalysis depends on histidine 64, which acts as the Charge relay system. Ca(2+)-binding residues include glutamate 76, asparagine 78, and glutamate 86. The active-site Charge relay system is aspartate 108. Residue serine 200 is the Charge relay system of the active site.

It belongs to the peptidase S1 family. The cofactor is Ca(2+).

It is found in the secreted. The protein localises to the extracellular space. The catalysed reaction is Preferential cleavage: Arg-|-Xaa, Lys-|-Xaa.. The chain is Trypsin V-B from Rattus norvegicus (Rat).